The following is a 426-amino-acid chain: MLDAKYVKDNLQQVAEKLATRGYQFDIAEFEAQEQKRKHLQERTQDLQSQRNTISKEIGQKKAKGEDTSDIFAKVNQINEELKIIEKELKDLQDTINQTLLSMPNLPADDVPVGKDENDNVEIRRWGTPREFHPEAPAKDHSDIGEILKMIDFKAAAKVTGSRFMVLKNKIAKLHRALSQFMLDLHTEKHGYEELYVPYLVNNDSLYGTGQLPKFAANLFKLEGDFEYSLIPTAEVPITNLVRDEILDTETLPRYYTAHTPCFRSEAGSYGRDTKGMIRQHQFEKVELVHITTADKGEESLELLTSHAEKVLQKLNLPYRVMKLCTGDMGFSAKKTYDLEVWLPSQNTYREISSCSWCGDFQARRMKARHKNPSMKKPELVHTLNGSGLAVGRTLLAIIENYQQEDGSIMVPDALIKYMGGISVIK.

A disordered region spans residues 36 to 66; that stretch reads KRKHLQERTQDLQSQRNTISKEIGQKKAKGE. Residues 46–55 are compositionally biased toward polar residues; that stretch reads DLQSQRNTIS. 233–235 serves as a coordination point for L-serine; the sequence is TAE. ATP is bound at residue 264-266; the sequence is RSE. Residue glutamate 287 coordinates L-serine. Residue 351–354 participates in ATP binding; it reads EISS. Residue serine 387 participates in L-serine binding.

It belongs to the class-II aminoacyl-tRNA synthetase family. Type-1 seryl-tRNA synthetase subfamily. In terms of assembly, homodimer. The tRNA molecule binds across the dimer.

The protein localises to the cytoplasm. It catalyses the reaction tRNA(Ser) + L-serine + ATP = L-seryl-tRNA(Ser) + AMP + diphosphate + H(+). It carries out the reaction tRNA(Sec) + L-serine + ATP = L-seryl-tRNA(Sec) + AMP + diphosphate + H(+). Its pathway is aminoacyl-tRNA biosynthesis; selenocysteinyl-tRNA(Sec) biosynthesis; L-seryl-tRNA(Sec) from L-serine and tRNA(Sec): step 1/1. In terms of biological role, catalyzes the attachment of serine to tRNA(Ser). Is also able to aminoacylate tRNA(Sec) with serine, to form the misacylated tRNA L-seryl-tRNA(Sec), which will be further converted into selenocysteinyl-tRNA(Sec). The sequence is that of Serine--tRNA ligase from Francisella tularensis subsp. holarctica (strain FTNF002-00 / FTA).